The primary structure comprises 355 residues: Syntaxin-5 (355 aa).

Residues 1–333 lie on the Cytoplasmic side of the membrane; the sequence is MIPRKRYGSK…KYFQSVTSNR (333 aa). The span at 28 to 37 shows a compositional bias: polar residues; it reads PATAGSSSSD. The interval 28 to 47 is disordered; sequence PATAGSSSSDIAPLPPPVAL. Positions 245-247 match the IxM motif; signal for cargo packaging into COPII-coated vesicles motif; that stretch reads IDM. In terms of domain architecture, t-SNARE coiled-coil homology spans 263–325; that stretch reads DSYIQSRADT…EAAHSEILKY (63 aa). The stretch at 287–318 forms a coiled coil; the sequence is FQQLAHMVKEQEETIQRIDENVLGAQLDVEAA. A helical; Anchor for type IV membrane protein transmembrane segment spans residues 334 to 354; that stretch reads WLMVKIFLILIVFFIIFVVFL. Residue A355 is a topological domain, vesicular.

Belongs to the syntaxin family. As to quaternary structure, part of a ternary complex containing STX5A, NSFL1C and VCP. Part of a unique SNARE complex composed of the Golgi SNAREs GOSR1, GOSR2 and YKT6. This complex also includes VTI1A. Component of a SNARE complex consisting of STX5, YKT6, GOSR1 and BET1L. Interacts with BET1L. Interacts with BET1. Interacts with COG4. Interacts with GM130/GOLGA2. Interacts (via IxM motif) with SEC24C and SEC24D; mediates STX5 packaging into COPII-coated vesicles. Interacts with VLDLR; this interaction mediates VLDLR translocation from the endoplasmic reticulum to the plasma membrane.

It is found in the endoplasmic reticulum-Golgi intermediate compartment membrane. The protein localises to the golgi apparatus membrane. Its function is as follows. Mediates endoplasmic reticulum to Golgi transport. Together with p115/USO1 and GM130/GOLGA2, involved in vesicle tethering and fusion at the cis-Golgi membrane to maintain the stacked and inter-connected structure of the Golgi apparatus. The chain is Syntaxin-5 (STX5) from Bos taurus (Bovine).